The primary structure comprises 356 residues: Heparan sulfate 2-O-sulfotransferase 1 (356 aa).

At 1 to 11 the chain is on the cytoplasmic side; sequence MGLLRIMMPPK. Residues 12 to 28 traverse the membrane as a helical; Signal-anchor for type II membrane protein segment; it reads LQLLAVVAFAVAMLFLE. The stretch at 24-51 forms a coiled coil; that stretch reads MLFLENQIQKLEESRSKLERAIARHEVR. Over 29–356 the chain is Lumenal; it reads NQIQKLEESR…FYEKIYPKSN (328 aa). Residues lysine 83, threonine 84, alanine 85, serine 86, threonine 87, and serine 88 each coordinate adenosine 3',5'-bisphosphate. Residues asparagine 108 and asparagine 127 are each glycosylated (N-linked (GlcNAc...) asparagine). Catalysis depends on residues histidine 140 and histidine 142. Adenosine 3',5'-bisphosphate contacts are provided by arginine 164 and serine 172. 2 disulfides stabilise this stretch: cysteine 201–cysteine 209 and cysteine 222–cysteine 228. Positions 279, 285, 290, and 293 each coordinate adenosine 3',5'-bisphosphate.

It belongs to the sulfotransferase 3 family. As to quaternary structure, homotrimer. Interacts with the C5-epimerase GLCE. N-glycosylated.

It is found in the golgi apparatus membrane. In terms of biological role, catalyzes the transfer of a sulfo group from 3'-phospho-5'-adenylyl sulfate (PAPS) to the 2-OH position of iduronic acid (IdoA) or glucuronic acid (GlcA) within the heparan sulfate (HS) chain and participates in HS biosynthesis. Required for metanephric development of kidney formation, suggesting that 2-O-sulfation within HS is essential for signaling between ureteric bud and metanephric mesenchyme. This chain is Heparan sulfate 2-O-sulfotransferase 1, found in Pongo abelii (Sumatran orangutan).